The following is a 152-amino-acid chain: Large ribosomal subunit protein bL9 (152 aa).

This sequence belongs to the bacterial ribosomal protein bL9 family.

Its function is as follows. Binds to the 23S rRNA. The chain is Large ribosomal subunit protein bL9 from Synechococcus sp. (strain CC9605).